Consider the following 476-residue polypeptide: Thyroid receptor-interacting protein 6 (476 aa).

Over residues 1–12 the composition is skewed to pro residues; the sequence is MSGPTWLPPKQP. 2 disordered regions span residues 1 to 93 and 108 to 253; these read MSGP…PGSL and NGGR…QPPE. Asymmetric dimethylarginine; alternate is present on arginine 25. At arginine 25 the chain carries Omega-N-methylarginine; alternate. The residue at position 55 (tyrosine 55) is a Phosphotyrosine; by SRC. Serine 92 is subject to Phosphoserine. Position 111 is an omega-N-methylarginine (arginine 111). At serine 142 the chain carries Phosphoserine. The span at 152-167 shows a compositional bias: low complexity; that stretch reads PTPASYTTASTPAGPA. 2 positions are modified to omega-N-methylarginine: arginine 179 and arginine 186. The residue at position 189 (serine 189) is a Phosphoserine. An omega-N-methylarginine mark is found at arginine 205, arginine 236, and arginine 238. Serine 249 carries the phosphoserine modification. 3 consecutive LIM zinc-binding domains span residues 279–316, 339–398, and 399–467; these read CGGC…QLRG, CATC…FAPR, and CSVC…RIQE. Positions 469-476 are interaction with MAGI1 and PTPN13; the sequence is SATVTTDC.

The protein belongs to the zyxin/ajuba family. In terms of assembly, specifically interacts with the ligand binding domain of the thyroid receptor (TR) in the presence of thyroid hormone. Interacts (via the third LIM domain and C-terminus) with PTPN13 (via the second PDZ domain). Interacts (via the second LIM domain or via the third LIM domain plus C-terminus) with PDLIM4 (via PDZ domain). Found in a complex with PTPN13 and PDLIM4. Interacts with SVIL isoform 2. Interacts with LPAR2 but not other LPA receptors. Interacts with PRKAA2. Interacts with MAGI1. Interacts with SCRIB. In case of infection, interacts with S.typhimurium protein sseI. Post-translationally, phosphorylation at Tyr-55 by SRC is required for enhancement of lysophosphatidic acid-induced cell migration. Tyr-55 is dephosphorylated by PTPN13. Abundantly expressed in kidney, liver and lung. Lower levels in heart, placenta and pancreas. Expressed in colonic epithelial cells. Up-regulated in colonic tumors.

Its subcellular location is the cytoplasm. The protein resides in the cytoskeleton. It is found in the cell junction. It localises to the focal adhesion. The protein localises to the nucleus. Functionally, relays signals from the cell surface to the nucleus to weaken adherens junction and promote actin cytoskeleton reorganization and cell invasiveness. Involved in lysophosphatidic acid-induced cell adhesion and migration. Acts as a transcriptional coactivator for NF-kappa-B and JUN, and mediates the transrepression of these transcription factors induced by glucocorticoid receptor. The polypeptide is Thyroid receptor-interacting protein 6 (TRIP6) (Homo sapiens (Human)).